The following is a 318-amino-acid chain: Methionyl-tRNA formyltransferase (318 aa).

Position 112–115 (112–115) interacts with (6S)-5,6,7,8-tetrahydrofolate; sequence SILP.

Belongs to the Fmt family.

The enzyme catalyses L-methionyl-tRNA(fMet) + (6R)-10-formyltetrahydrofolate = N-formyl-L-methionyl-tRNA(fMet) + (6S)-5,6,7,8-tetrahydrofolate + H(+). Attaches a formyl group to the free amino group of methionyl-tRNA(fMet). The formyl group appears to play a dual role in the initiator identity of N-formylmethionyl-tRNA by promoting its recognition by IF2 and preventing the misappropriation of this tRNA by the elongation apparatus. The sequence is that of Methionyl-tRNA formyltransferase from Haemophilus influenzae (strain PittEE).